A 260-amino-acid polypeptide reads, in one-letter code: Adenosylcobinamide-GDP ribazoletransferase (260 aa).

Helical transmembrane passes span 43-63, 64-84, 117-137, 143-163, 197-217, and 237-257; these read LVGT…QFIF, PASV…GGFH, GSLA…ELAL, VAGG…SIIF, VICL…TLFV, and TLGA…LLLW.

It belongs to the CobS family. Requires Mg(2+) as cofactor.

The protein resides in the cell inner membrane. The enzyme catalyses alpha-ribazole + adenosylcob(III)inamide-GDP = adenosylcob(III)alamin + GMP + H(+). The catalysed reaction is alpha-ribazole 5'-phosphate + adenosylcob(III)inamide-GDP = adenosylcob(III)alamin 5'-phosphate + GMP + H(+). The protein operates within cofactor biosynthesis; adenosylcobalamin biosynthesis; adenosylcobalamin from cob(II)yrinate a,c-diamide: step 7/7. Joins adenosylcobinamide-GDP and alpha-ribazole to generate adenosylcobalamin (Ado-cobalamin). Also synthesizes adenosylcobalamin 5'-phosphate from adenosylcobinamide-GDP and alpha-ribazole 5'-phosphate. The protein is Adenosylcobinamide-GDP ribazoletransferase of Shewanella amazonensis (strain ATCC BAA-1098 / SB2B).